A 217-amino-acid polypeptide reads, in one-letter code: tRNA (guanine-N(7)-)-methyltransferase (217 aa).

S-adenosyl-L-methionine is bound by residues E44, D69, D96, and D118. The active site involves D118. K122 contacts substrate. Residues 124–129 (RHEKRR) form an interaction with RNA region. Substrate is bound by residues D154 and 193 to 196 (TEYE).

The protein belongs to the class I-like SAM-binding methyltransferase superfamily. TrmB family.

The enzyme catalyses guanosine(46) in tRNA + S-adenosyl-L-methionine = N(7)-methylguanosine(46) in tRNA + S-adenosyl-L-homocysteine. The protein operates within tRNA modification; N(7)-methylguanine-tRNA biosynthesis. In terms of biological role, catalyzes the formation of N(7)-methylguanine at position 46 (m7G46) in tRNA. The sequence is that of tRNA (guanine-N(7)-)-methyltransferase from Lactococcus lactis subsp. cremoris (strain SK11).